Reading from the N-terminus, the 129-residue chain is Small ribosomal subunit protein uS11 (129 aa).

It belongs to the universal ribosomal protein uS11 family. As to quaternary structure, part of the 30S ribosomal subunit. Interacts with proteins S7 and S18. Binds to IF-3.

In terms of biological role, located on the platform of the 30S subunit, it bridges several disparate RNA helices of the 16S rRNA. Forms part of the Shine-Dalgarno cleft in the 70S ribosome. The protein is Small ribosomal subunit protein uS11 of Bradyrhizobium diazoefficiens (strain JCM 10833 / BCRC 13528 / IAM 13628 / NBRC 14792 / USDA 110).